The primary structure comprises 882 residues: Piwi-like protein 3 (882 aa).

Residues 1 to 15 (MPGRARTRARGRARR) are compositionally biased toward basic residues. The segment at 1–91 (MPGRARTRAR…EAGLHTAPLQ (91 aa)) is disordered. Positions 32–46 (SATTQEPPQLQSTPR) are enriched in polar residues. A PAZ domain is found at 293–406 (TAYDFIKRTS…LIPQLCHMTG (114 aa)). One can recognise a Piwi domain in the interval 578 to 868 (KVICILPNDD…LAYLVGQSIH (291 aa)).

The protein belongs to the argonaute family. Piwi subfamily. As to expression, expressed in testis.

It localises to the cytoplasm. In terms of biological role, may play a role during spermatogenesis by repressing transposable elements and preventing their mobilization, which is essential for the germline integrity. Acts via the piRNA metabolic process, which mediates the repression of transposable elements during meiosis by forming complexes composed of piRNAs and Piwi proteins and govern the methylation and subsequent repression of transposons. Directly binds piRNAs, a class of 24 to 30 nucleotide RNAs that are generated by a Dicer-independent mechanism and are primarily derived from transposons and other repeated sequence elements. Besides their function in transposable elements repression, piRNAs are probably involved in other processes during meiosis such as translation regulation. The chain is Piwi-like protein 3 (PIWIL3) from Homo sapiens (Human).